The sequence spans 436 residues: tRNA(Ile)-lysidine synthase (436 aa).

Residue 27–32 coordinates ATP; the sequence is SGGVDS.

Belongs to the tRNA(Ile)-lysidine synthase family.

It localises to the cytoplasm. It catalyses the reaction cytidine(34) in tRNA(Ile2) + L-lysine + ATP = lysidine(34) in tRNA(Ile2) + AMP + diphosphate + H(+). Its function is as follows. Ligates lysine onto the cytidine present at position 34 of the AUA codon-specific tRNA(Ile) that contains the anticodon CAU, in an ATP-dependent manner. Cytidine is converted to lysidine, thus changing the amino acid specificity of the tRNA from methionine to isoleucine. This Vibrio vulnificus (strain YJ016) protein is tRNA(Ile)-lysidine synthase.